The sequence spans 481 residues: Proline--tRNA ligase (481 aa).

This sequence belongs to the class-II aminoacyl-tRNA synthetase family. ProS type 3 subfamily. As to quaternary structure, homodimer.

Its subcellular location is the cytoplasm. It carries out the reaction tRNA(Pro) + L-proline + ATP = L-prolyl-tRNA(Pro) + AMP + diphosphate. Its function is as follows. Catalyzes the attachment of proline to tRNA(Pro) in a two-step reaction: proline is first activated by ATP to form Pro-AMP and then transferred to the acceptor end of tRNA(Pro). This Prosthecochloris aestuarii (strain DSM 271 / SK 413) protein is Proline--tRNA ligase.